The chain runs to 292 residues: 1D-myo-inositol 2-acetamido-2-deoxy-alpha-D-glucopyranoside deacetylase (292 aa).

Histidine 12, aspartate 15, and histidine 147 together coordinate Zn(2+).

Belongs to the MshB deacetylase family. The cofactor is Zn(2+).

It catalyses the reaction 1D-myo-inositol 2-acetamido-2-deoxy-alpha-D-glucopyranoside + H2O = 1D-myo-inositol 2-amino-2-deoxy-alpha-D-glucopyranoside + acetate. Its function is as follows. Catalyzes the deacetylation of 1D-myo-inositol 2-acetamido-2-deoxy-alpha-D-glucopyranoside (GlcNAc-Ins) in the mycothiol biosynthesis pathway. The chain is 1D-myo-inositol 2-acetamido-2-deoxy-alpha-D-glucopyranoside deacetylase from Rhodococcus opacus (strain B4).